The following is a 346-amino-acid chain: 26S proteasome non-ATPase regulatory subunit 4 (346 aa).

One can recognise a VWFA domain in the interval 5–190 (STMICVDNSE…LTDALLQSSV (186 aa)). 2 consecutive UIM domains span residues 216–235 (ENDPDLALALRVSMEEERAR) and 273–292 (TEEQQLEWALRLSMQENAPA). A disordered region spans residues 290 to 346 (APAEQPQVQHEQMDVDGAPAVGGDNLDDLMNNPELLQQIVDDLPAANAEKDDDKEKK). Positions 337–346 (AEKDDDKEKK) are enriched in basic and acidic residues.

The protein belongs to the proteasome subunit S5A family. As to quaternary structure, the 26S proteasome is composed of a core protease, known as the 20S proteasome, capped at one or both ends by the 19S regulatory complex (RC). The RC is composed of at least 18 different subunits in two subcomplexes, the base and the lid, which form the portions proximal and distal to the 20S proteolytic core, respectively. Broadly expressed with high expression in the pharynx, intestine, hypodermis and spermatheca and weak expression in the excretory cell, body wall muscle, vulva and somatic gonad.

Its subcellular location is the cytoplasm. It localises to the nucleus. Functionally, binds and presumably selects ubiquitin-conjugates for destruction. Required for protein degradation and ubiquitin-proteasome system (UBS) function and regulates proteasomal subunit expression. Involvement in UBS might be cell type specific. Regulator of the autophagy-lysosome pathway that may confer resistance to autophagy by regulating the expression of autophagy-related proteins such as lgg-1, and by regulating lysosome formation, possibly by modulating elt-2 activity. Required for fertility, sperm production, and sex determination through regulation of tra-2 protein. Plays a role in the elimination of paternal mitochondria in fertilized eggs. The protein is 26S proteasome non-ATPase regulatory subunit 4 of Caenorhabditis elegans.